Reading from the N-terminus, the 503-residue chain is ATP synthase subunit alpha (503 aa).

Glycine 169–threonine 176 contacts ATP.

Belongs to the ATPase alpha/beta chains family. As to quaternary structure, F-type ATPases have 2 components, CF(1) - the catalytic core - and CF(0) - the membrane proton channel. CF(1) has five subunits: alpha(3), beta(3), gamma(1), delta(1), epsilon(1). CF(0) has three main subunits: a(1), b(2) and c(9-12). The alpha and beta chains form an alternating ring which encloses part of the gamma chain. CF(1) is attached to CF(0) by a central stalk formed by the gamma and epsilon chains, while a peripheral stalk is formed by the delta and b chains.

The protein resides in the cell membrane. The enzyme catalyses ATP + H2O + 4 H(+)(in) = ADP + phosphate + 5 H(+)(out). Functionally, produces ATP from ADP in the presence of a proton gradient across the membrane. The alpha chain is a regulatory subunit. This is ATP synthase subunit alpha from Dehalococcoides mccartyi (strain ATCC BAA-2100 / JCM 16839 / KCTC 5957 / BAV1).